The sequence spans 451 residues: Vacuolar cation/proton exchanger 1a (451 aa).

The Cytoplasmic segment spans residues 1–58 (MEAAAAMEAGRKLAARHPHGRSRTAHNMSSSSLRKKSDAALVRKVPVAPLRPLLANLQ). The interval 9–37 (AGRKLAARHPHGRSRTAHNMSSSSLRKKS) is disordered. Basic residues predominate over residues 13 to 24 (LAARHPHGRSRT). A helical transmembrane segment spans residues 59-79 (EVFLATKLAVLFPAVPLAIAA). Topologically, residues 80–86 (QCFRFDQ) are vacuolar. The helical transmembrane segment at 87 to 107 (VWVFALSLLGLIPLAERVSFL) threads the bilayer. Over 108–120 (TEQIALYTGPTVG) the chain is Cytoplasmic. Residues 121-141 (GLLNATCGNATELIIALFALL) form a helical membrane-spanning segment. The interval 128–163 (GNATELIIALFALLKGKIEVVKCSLLGSVLSNLLLV) is cation selection. Residues 142–153 (KGKIEVVKCSLL) are Vacuolar-facing. A helical transmembrane segment spans residues 154 to 174 (GSVLSNLLLVLGTSLFCGGVV). Residues 175-191 (NLGARQPYDRNQSDVST) are Cytoplasmic-facing. The helical transmembrane segment at 192-212 (ALLFLAVLCHSAPLLLRYAVA) threads the bilayer. The Vacuolar segment spans residues 213–228 (AGEHSVSATSAAASLD). The helical transmembrane segment at 229 to 249 (LSRACSFVMLASYVAYLFFQL) threads the bilayer. Residues 250 to 273 (KTHRQLFEPQEVDGGDAGDDDEEP) lie on the Cytoplasmic side of the membrane. Residues 274–294 (ALGFASALFWLALMTAVISVL) traverse the membrane as a helical segment. The Vacuolar portion of the chain corresponds to 295-317 (SEYVVGTIEPTSQSWGLSVSFIS). A helical membrane pass occupies residues 318-338 (IILLPIVGNAAEHAGAIIFAL). The segment at 325 to 360 (GNAAEHAGAIIFALKNKLDITLGVALGSATQISMFV) is cation selection. Residues 339 to 352 (KNKLDITLGVALGS) are Cytoplasmic-facing. A helical membrane pass occupies residues 353-373 (ATQISMFVVPLSVLVAWIMGV). Residues 374 to 378 (QMDLD) lie on the Vacuolar side of the membrane. Residues 379-399 (FKLLETGSLFMAVLVTAFTLQ) form a helical membrane-spanning segment. Residues 400–404 (DGTSH) lie on the Cytoplasmic side of the membrane. A helical transmembrane segment spans residues 405–425 (YLKGILLLLCYIVIGACFFVA). Over 426 to 451 (RQPAGHANSNGALLDVPTGSMSVQAA) the chain is Vacuolar.

Belongs to the Ca(2+):cation antiporter (CaCA) (TC 2.A.19) family. Cation/proton exchanger (CAX) subfamily. Ubiquitous.

The protein localises to the vacuole membrane. Functionally, vacuolar cation/proton exchanger (CAX). Translocates Ca(2+) and other metal ions into vacuoles using the proton gradient formed by H(+)-ATPase and H(+)-pyrophosphatase. The protein is Vacuolar cation/proton exchanger 1a (CAX1a) of Oryza sativa subsp. japonica (Rice).